We begin with the raw amino-acid sequence, 921 residues long: Probable TonB-dependent receptor NMB1497 (921 aa).

Residues 1–25 (MRSSFRLKPICFYLMGVTLYHYSYA) form the signal peptide. The 122-residue stretch at 53–174 (DKKVFTDARA…LAGSANLRTL (122 aa)) folds into the TBDR plug domain. The TBDR beta-barrel domain maps to 185–921 (TYGLLLKGLT…TFLMTMSYKF (737 aa)). The TonB C-terminal box signature appears at 904 to 921 (LTNFARGRTFLMTMSYKF).

The protein belongs to the TonB-dependent receptor family.

The protein resides in the cell outer membrane. Functionally, probable receptor, TonB-dependent. The protein is Probable TonB-dependent receptor NMB1497 of Neisseria meningitidis serogroup B (strain ATCC BAA-335 / MC58).